The sequence spans 239 residues: Ribonuclease PH (239 aa).

Residues Arg87 and 125–127 (GTR) contribute to the phosphate site.

It belongs to the RNase PH family. In terms of assembly, homohexameric ring arranged as a trimer of dimers.

The catalysed reaction is tRNA(n+1) + phosphate = tRNA(n) + a ribonucleoside 5'-diphosphate. Its function is as follows. Phosphorolytic 3'-5' exoribonuclease that plays an important role in tRNA 3'-end maturation. Removes nucleotide residues following the 3'-CCA terminus of tRNAs; can also add nucleotides to the ends of RNA molecules by using nucleoside diphosphates as substrates, but this may not be physiologically important. Probably plays a role in initiation of 16S rRNA degradation (leading to ribosome degradation) during starvation. This chain is Ribonuclease PH, found in Ectopseudomonas mendocina (strain ymp) (Pseudomonas mendocina).